The following is a 204-amino-acid chain: MTTGKFITFEGIDGAGKSTHLSFVAELLCERKKTVVVTREPGGTSLGEELREILLHEKMHLETEALLMFAARREHIAQVIAPALERGDWVISDRFTDATFAYQGGGRKLDRAKLNALEQWVHPHLQPHLTLLFDVPLDVARARLDATRTLDKFEQEKAEFFAATRAEYLRRAAEFPQRFHVIDSTRSIAAIQEQLRAIVAGIDS.

11-18 (GIDGAGKS) is an ATP binding site.

The protein belongs to the thymidylate kinase family.

It carries out the reaction dTMP + ATP = dTDP + ADP. Phosphorylation of dTMP to form dTDP in both de novo and salvage pathways of dTTP synthesis. The sequence is that of Thymidylate kinase from Janthinobacterium sp. (strain Marseille) (Minibacterium massiliensis).